Reading from the N-terminus, the 485-residue chain is Glutamyl-tRNA(Gln) amidotransferase subunit A (485 aa).

Active-site charge relay system residues include Lys-79 and Ser-154. The active-site Acyl-ester intermediate is Ser-178.

This sequence belongs to the amidase family. GatA subfamily. Heterotrimer of A, B and C subunits.

It carries out the reaction L-glutamyl-tRNA(Gln) + L-glutamine + ATP + H2O = L-glutaminyl-tRNA(Gln) + L-glutamate + ADP + phosphate + H(+). Its function is as follows. Allows the formation of correctly charged Gln-tRNA(Gln) through the transamidation of misacylated Glu-tRNA(Gln) in organisms which lack glutaminyl-tRNA synthetase. The reaction takes place in the presence of glutamine and ATP through an activated gamma-phospho-Glu-tRNA(Gln). In Staphylococcus carnosus (strain TM300), this protein is Glutamyl-tRNA(Gln) amidotransferase subunit A.